The primary structure comprises 157 residues: 6,7-dimethyl-8-ribityllumazine synthase (157 aa).

Residues W27, 59–61 (AIE), and 81–83 (VVI) each bind 5-amino-6-(D-ribitylamino)uracil. Residue 86-87 (ET) participates in (2S)-2-hydroxy-3-oxobutyl phosphate binding. The Proton donor role is filled by H89. Position 114 (N114) interacts with 5-amino-6-(D-ribitylamino)uracil. R128 contributes to the (2S)-2-hydroxy-3-oxobutyl phosphate binding site.

This sequence belongs to the DMRL synthase family. As to quaternary structure, homopentamer.

The catalysed reaction is (2S)-2-hydroxy-3-oxobutyl phosphate + 5-amino-6-(D-ribitylamino)uracil = 6,7-dimethyl-8-(1-D-ribityl)lumazine + phosphate + 2 H2O + H(+). It participates in cofactor biosynthesis; riboflavin biosynthesis; riboflavin from 2-hydroxy-3-oxobutyl phosphate and 5-amino-6-(D-ribitylamino)uracil: step 1/2. Catalyzes the formation of 6,7-dimethyl-8-ribityllumazine by condensation of 5-amino-6-(D-ribitylamino)uracil with 3,4-dihydroxy-2-butanone 4-phosphate. This is the penultimate step in the biosynthesis of riboflavin. The protein is 6,7-dimethyl-8-ribityllumazine synthase of Mycolicibacterium vanbaalenii (strain DSM 7251 / JCM 13017 / BCRC 16820 / KCTC 9966 / NRRL B-24157 / PYR-1) (Mycobacterium vanbaalenii).